Here is a 514-residue protein sequence, read N- to C-terminus: MITSRLLVYVAVLVLCVIKVSSRDTFIAAVYEHAVKLPNATLVPVSHEEALAVMNQNLDLLEAAITSAANQGAHIIVTPEDGIYGWNFSRETIYPYLEDIPDPGVNWIPCNNPKRFGYTPVQERLSCLAKDNSIYVVANIGDKKPCNASDSQCPLDGRYQYNTDVVFDSQGKLVARYHKHNLFMGENQFNVPKKPEIVTFDTIFGRFGVFTCFDILFYDPAVTLVKDFHVDTIVFPTAWMNVLPHLSAIQFHSAWAMGMGVNFLASNIHHPSKRMTGSGIYAPDSPRAFHYDMKTKEGKLLLSQLDSYTHHPIVVNWTSYASGIKAFPTENQEFTGTAFFDEFTFLELTRVTGNYTVCQKKLCCHLSYKMSEKRTDEVYALGAFDGLHVVEGRYYLQICTLLKCKTAHVHTCGGAVETASTRFDMFSLSGTFGTQYVFPEVLLSETQLAPGEFQVSSDGRLFSMKPLSGPLLTVTLFGRIYEKDQTLKASSDPRSQVPGVMLLVIIPIVCSLSW.

The N-terminal stretch at 1–22 is a signal peptide; that stretch reads MITSRLLVYVAVLVLCVIKVSS. N-linked (GlcNAc...) asparagine glycosylation occurs at asparagine 39. In terms of domain architecture, CN hydrolase spans 40–307; sequence ATLVPVSHEE…GKLLLSQLDS (268 aa). Glutamate 80 serves as the catalytic Proton acceptor. 2 N-linked (GlcNAc...) asparagine glycosylation sites follow: asparagine 87 and asparagine 147. Residue lysine 179 is the Proton donor of the active site. Cysteine 212 functions as the Nucleophile in the catalytic mechanism. N-linked (GlcNAc...) asparagine glycans are attached at residues asparagine 316 and asparagine 354. The GPI-anchor amidated aspartate moiety is linked to residue aspartate 492. Positions 493–514 are cleaved as a propeptide — removed in mature form; the sequence is PRSQVPGVMLLVIIPIVCSLSW.

It belongs to the carbon-nitrogen hydrolase superfamily. BTD/VNN family. In terms of assembly, monomer.

The protein resides in the cell membrane. The enzyme catalyses (R)-pantetheine + H2O = cysteamine + (R)-pantothenate. Amidohydrolase that hydrolyzes specifically one of the carboamide linkages in D-pantetheine thus recycling pantothenic acid (vitamin B5) and releasing cysteamine. The protein is Pantetheinase (VNN1) of Canis lupus familiaris (Dog).